Consider the following 303-residue polypeptide: Monoglyceride lipase (303 aa).

Thr10 bears the Phosphothreonine mark. Tyr58 carries the post-translational modification 3'-nitrotyrosine. Ser122 (nucleophile) is an active-site residue. A Phosphoserine modification is found at Ser189. Residues Asp239 and His269 each act as charge relay system in the active site.

The protein belongs to the AB hydrolase superfamily. Monoacylglycerol lipase family. Homodimer. Ubiquitous.

It is found in the cytoplasm. Its subcellular location is the cytosol. It localises to the membrane. It catalyses the reaction Hydrolyzes glycerol monoesters of long-chain fatty acids.. The catalysed reaction is a 1-acylglycerol + H2O = glycerol + a fatty acid + H(+). The enzyme catalyses a 2-acylglycerol + H2O = glycerol + a fatty acid + H(+). It carries out the reaction 2-(5Z,8Z,11Z,14Z-eicosatetraenoyl)-glycerol + H2O = glycerol + (5Z,8Z,11Z,14Z)-eicosatetraenoate + H(+). It catalyses the reaction 1-octanoylglycerol + H2O = octanoate + glycerol + H(+). The catalysed reaction is 1-decanoylglycerol + H2O = decanoate + glycerol + H(+). The enzyme catalyses 1-dodecanoylglycerol + H2O = dodecanoate + glycerol + H(+). It carries out the reaction 1-tetradecanoylglycerol + H2O = tetradecanoate + glycerol + H(+). It catalyses the reaction 2-hexadecanoylglycerol + H2O = glycerol + hexadecanoate + H(+). The catalysed reaction is 1-(9Z-octadecenoyl)-glycerol + H2O = glycerol + (9Z)-octadecenoate + H(+). The enzyme catalyses 2-(9Z-octadecenoyl)-glycerol + H2O = glycerol + (9Z)-octadecenoate + H(+). It carries out the reaction 2-(9Z,12Z-octadecadienoyl)-glycerol + H2O = (9Z,12Z)-octadecadienoate + glycerol + H(+). It catalyses the reaction 1-(5Z,8Z,11Z,14Z-eicosatetraenoyl)-glycerol + H2O = glycerol + (5Z,8Z,11Z,14Z)-eicosatetraenoate + H(+). The catalysed reaction is 1-(9Z,12Z-octadecadienoyl)-glycerol + H2O = (9Z,12Z)-octadecadienoate + glycerol + H(+). The enzyme catalyses 1-hexadecanoylglycerol + H2O = glycerol + hexadecanoate + H(+). It carries out the reaction 1-octadecanoylglycerol + H2O = octadecanoate + glycerol + H(+). It catalyses the reaction prostaglandin E2 1-glyceryl ester + H2O = prostaglandin E2 + glycerol + H(+). The catalysed reaction is prostaglandin D2-1-glycerol ester + H2O = prostaglandin D2 + glycerol + H(+). The enzyme catalyses 2-glyceryl-15-deoxy-Delta(12,14)-prostaglandin J2 + H2O = 15-deoxy-Delta(12,14)-prostaglandin J2 + glycerol + H(+). It carries out the reaction prostaglandin F2alpha 1-glyceryl ester + H2O = prostaglandin F2alpha + glycerol + H(+). The protein operates within glycerolipid metabolism; triacylglycerol degradation. In terms of biological role, converts monoacylglycerides to free fatty acids and glycerol. Hydrolyzes the endocannabinoid 2-arachidonoylglycerol, and thereby contributes to the regulation of endocannabinoid signaling, nociperception and perception of pain. Regulates the levels of fatty acids that serve as signaling molecules and promote cancer cell migration, invasion and tumor growth. The protein is Monoglyceride lipase of Mus musculus (Mouse).